Here is a 268-residue protein sequence, read N- to C-terminus: MRGAFYIAIALLVVRSRTATEIDPTDISEPYLNVVAIGGEDTRTTPKRYLRDGLAHSAANEERVKANVLSKSAKTLAAETEDWLRLSLSIGGHSHTPKSKRKVNLSPAKSQSGIRKKSTSINKRNYDKQVQADDPRLPEYLQIHQTFLKIPGMPHKMSLTEAVVMYGMVNRKVASKPGTKKNNEPLLRLMERSKWEDFENALDPMFMRLAPHEEMRKEYFHRLHTMYAKVYTFCHAHPSACTNKRAVSPLEKMIKVQKTKALLPLFKS.

An N-terminal signal peptide occupies residues 1–19 (MRGAFYIAIALLVVRSRTA). Residues 48 to 63 (RYLRDGLAHSAANEER) carry the RxLR-dEER motif. The interval 90 to 123 (IGGHSHTPKSKRKVNLSPAKSQSGIRKKSTSINK) is disordered. Over residues 107–123 (PAKSQSGIRKKSTSINK) the composition is skewed to polar residues.

Belongs to the RxLR effector family.

It is found in the secreted. The protein localises to the host nucleus. It localises to the host cytoplasm. Functionally, secreted effector that completely suppresses the host cell death induced by cell death-inducing proteins. This Plasmopara viticola (Downy mildew of grapevine) protein is Secreted RxLR effector protein 6.